The primary structure comprises 382 residues: Anhydro-N-acetylmuramic acid kinase (382 aa).

9 to 16 is an ATP binding site; the sequence is GTSLDGID.

The protein belongs to the anhydro-N-acetylmuramic acid kinase family.

It catalyses the reaction 1,6-anhydro-N-acetyl-beta-muramate + ATP + H2O = N-acetyl-D-muramate 6-phosphate + ADP + H(+). It participates in amino-sugar metabolism; 1,6-anhydro-N-acetylmuramate degradation. The protein operates within cell wall biogenesis; peptidoglycan recycling. In terms of biological role, catalyzes the specific phosphorylation of 1,6-anhydro-N-acetylmuramic acid (anhMurNAc) with the simultaneous cleavage of the 1,6-anhydro ring, generating MurNAc-6-P. Is required for the utilization of anhMurNAc either imported from the medium or derived from its own cell wall murein, and thus plays a role in cell wall recycling. This is Anhydro-N-acetylmuramic acid kinase from Bacillus cereus (strain ZK / E33L).